We begin with the raw amino-acid sequence, 745 residues long: Kinesin-like protein KIN-14M (745 aa).

Residues 1–31 (MVGEMTNNGRIRPSFPVKDLTSNEGSEYGGP) are disordered. The tract at residues 1–35 (MVGEMTNNGRIRPSFPVKDLTSNEGSEYGGPVEFT) is globular. Microtubule-binding stretches follow at residues 65-77 (YVKR…RWFQ) and 198-745 (SLQL…LSLG). Coiled-coil stretches lie at residues 76-223 (FQEL…GEKE) and 259-389 (KDEL…GNIR). The Kinesin motor domain occupies 387 to 724 (NIRVFCRVRP…LRFAARVNAC (338 aa)). Residue 472–479 (GQTGSGKT) coordinates ATP.

This sequence belongs to the TRAFAC class myosin-kinesin ATPase superfamily. Kinesin family. KIN-14 subfamily. In terms of assembly, bind to microtubules in an ATP-insensitive manner (in vitro). Homodimer and heterodimer with KIN14N/KATC (in vitro).

Its subcellular location is the cytoplasm. The protein resides in the cytoskeleton. This is Kinesin-like protein KIN-14M from Arabidopsis thaliana (Mouse-ear cress).